The sequence spans 117 residues: Non-specific lipid-transfer protein 1 (117 aa).

A signal peptide spans 1 to 25 (MAGLVKLSCLVLACMIVAGPIATNA). Cystine bridges form between Cys29/Cys76, Cys39/Cys53, Cys54/Cys99, and Cys74/Cys113.

Belongs to the plant LTP family.

Plant non-specific lipid-transfer proteins transfer phospholipids as well as galactolipids across membranes. May play a role in wax or cutin deposition in the cell walls of expanding epidermal cells and certain secretory tissues. The sequence is that of Non-specific lipid-transfer protein 1 (LTP1) from Brassica napus (Rape).